The primary structure comprises 299 residues: Acetylglutamate kinase (299 aa).

Substrate-binding positions include 64 to 65 (GG), arginine 86, and asparagine 197.

The protein belongs to the acetylglutamate kinase family. ArgB subfamily.

The protein localises to the cytoplasm. It catalyses the reaction N-acetyl-L-glutamate + ATP = N-acetyl-L-glutamyl 5-phosphate + ADP. It functions in the pathway amino-acid biosynthesis; L-arginine biosynthesis; N(2)-acetyl-L-ornithine from L-glutamate: step 2/4. Catalyzes the ATP-dependent phosphorylation of N-acetyl-L-glutamate. This chain is Acetylglutamate kinase, found in Persephonella marina (strain DSM 14350 / EX-H1).